Reading from the N-terminus, the 203-residue chain is MIGRLRGIILEKQPPIVLLETGGVGYEVHMPMTCFYELPEAGQEAIVFTHFVVREDAQLLYGFNNKQERTLFKELIKTNGVGPKLALAILSGMSAQQFVNAVEREELGALVKLPGIGKKTAERLIVEMKDRFKGLHGDLFTPAVDLVLTSPASPTSEDAEQEAVAALVALGYKPQEASRMVSKIARPDASSETLIRDALRAAL.

The tract at residues 1–64 (MIGRLRGIIL…EDAQLLYGFN (64 aa)) is domain I. The segment at 65 to 142 (NKQERTLFKE…KGLHGDLFTP (78 aa)) is domain II. A flexible linker region spans residues 143–154 (AVDLVLTSPASP). Positions 155–203 (TSEDAEQEAVAALVALGYKPQEASRMVSKIARPDASSETLIRDALRAAL) are domain III.

Belongs to the RuvA family. In terms of assembly, homotetramer. Forms an RuvA(8)-RuvB(12)-Holliday junction (HJ) complex. HJ DNA is sandwiched between 2 RuvA tetramers; dsDNA enters through RuvA and exits via RuvB. An RuvB hexamer assembles on each DNA strand where it exits the tetramer. Each RuvB hexamer is contacted by two RuvA subunits (via domain III) on 2 adjacent RuvB subunits; this complex drives branch migration. In the full resolvosome a probable DNA-RuvA(4)-RuvB(12)-RuvC(2) complex forms which resolves the HJ.

The protein localises to the cytoplasm. The RuvA-RuvB-RuvC complex processes Holliday junction (HJ) DNA during genetic recombination and DNA repair, while the RuvA-RuvB complex plays an important role in the rescue of blocked DNA replication forks via replication fork reversal (RFR). RuvA specifically binds to HJ cruciform DNA, conferring on it an open structure. The RuvB hexamer acts as an ATP-dependent pump, pulling dsDNA into and through the RuvAB complex. HJ branch migration allows RuvC to scan DNA until it finds its consensus sequence, where it cleaves and resolves the cruciform DNA. This Salmonella agona (strain SL483) protein is Holliday junction branch migration complex subunit RuvA.